A 342-amino-acid chain; its full sequence is Probable dual-specificity RNA methyltransferase RlmN (342 aa).

Glu91 serves as the catalytic Proton acceptor. One can recognise a Radical SAM core domain in the interval 97–327; the sequence is YRYGNTVCLS…VTVRRELGDE (231 aa). A disulfide bond links Cys104 and Cys332. [4Fe-4S] cluster-binding residues include Cys111, Cys115, and Cys118. S-adenosyl-L-methionine-binding positions include 158 to 159, Ser190, 213 to 215, and Asn289; these read GE and SLH. Cys332 functions as the S-methylcysteine intermediate in the catalytic mechanism.

The protein belongs to the radical SAM superfamily. RlmN family. The cofactor is [4Fe-4S] cluster.

Its subcellular location is the cytoplasm. It catalyses the reaction adenosine(2503) in 23S rRNA + 2 reduced [2Fe-2S]-[ferredoxin] + 2 S-adenosyl-L-methionine = 2-methyladenosine(2503) in 23S rRNA + 5'-deoxyadenosine + L-methionine + 2 oxidized [2Fe-2S]-[ferredoxin] + S-adenosyl-L-homocysteine. It carries out the reaction adenosine(37) in tRNA + 2 reduced [2Fe-2S]-[ferredoxin] + 2 S-adenosyl-L-methionine = 2-methyladenosine(37) in tRNA + 5'-deoxyadenosine + L-methionine + 2 oxidized [2Fe-2S]-[ferredoxin] + S-adenosyl-L-homocysteine. Specifically methylates position 2 of adenine 2503 in 23S rRNA and position 2 of adenine 37 in tRNAs. The protein is Probable dual-specificity RNA methyltransferase RlmN of Carboxydothermus hydrogenoformans (strain ATCC BAA-161 / DSM 6008 / Z-2901).